Consider the following 491-residue polypeptide: Cobyric acid synthase (491 aa).

Residues 246–435 (KIDVAVIKLP…IHGIFDGANF (190 aa)) enclose the GATase cobBQ-type domain. C327 acts as the Nucleophile in catalysis. H427 is a catalytic residue.

It belongs to the CobB/CobQ family. CobQ subfamily.

The protein operates within cofactor biosynthesis; adenosylcobalamin biosynthesis. Its function is as follows. Catalyzes amidations at positions B, D, E, and G on adenosylcobyrinic A,C-diamide. NH(2) groups are provided by glutamine, and one molecule of ATP is hydrogenolyzed for each amidation. The protein is Cobyric acid synthase of Clostridium acetobutylicum (strain ATCC 824 / DSM 792 / JCM 1419 / IAM 19013 / LMG 5710 / NBRC 13948 / NRRL B-527 / VKM B-1787 / 2291 / W).